Reading from the N-terminus, the 178-residue chain is Gamma-crystallin M1 (178 aa).

Beta/gamma crystallin 'Greek key' domains are found at residues 2 to 40 and 41 to 86; these read GKII…RVES and GCFM…RMIP. The tract at residues 87–91 is connecting peptide; it reads PYRGS. 2 consecutive Beta/gamma crystallin 'Greek key' domains span residues 92-132 and 133-175; these read YRMR…HVMD and GHWL…RRIT.

This sequence belongs to the beta/gamma-crystallin family. Monomer.

Its function is as follows. Crystallins are the dominant structural components of the vertebrate eye lens. The protein is Gamma-crystallin M1 of Cyprinus carpio (Common carp).